Reading from the N-terminus, the 150-residue chain is Large ribosomal subunit protein bL9 (150 aa).

It belongs to the bacterial ribosomal protein bL9 family.

Its function is as follows. Binds to the 23S rRNA. The chain is Large ribosomal subunit protein bL9 from Neisseria meningitidis serogroup C / serotype 2a (strain ATCC 700532 / DSM 15464 / FAM18).